We begin with the raw amino-acid sequence, 948 residues long: Coiled-coil domain-containing protein 66 (948 aa).

2 positions are modified to phosphothreonine: T115 and T121. S369 is modified (phosphoserine). The segment at 458–499 (DRRRQKQLEHQKAITAQVEEKRRKKQLEEEQRKKEEQEEELR) is disordered. Residues 467–558 (HQKAITAQVE…EQRIRELAQK (92 aa)) adopt a coiled-coil conformation. The tract at residues 570–948 (GVDTIQMEYN…NQEESFGSSF (379 aa)) is mediates localization to cilia, centrosomes and spindle microtubules and the interaction with PCM1, CEP290, CEP104 and CSPP1. S606 bears the Phosphoserine mark. Disordered regions lie at residues 690–713 (QTKH…KRYI) and 788–808 (SFSK…RTQQ).

Homodimer; disulfide-linked. Interacts with CEP290. Interacts with PCM1. Interacts with ARMC9, TOGARAM1, CSPP1 and CEP104. Interacts with CDK5RAP2, CEP152, CEP192, TBG1 and PRC1. In terms of tissue distribution, widely expressed (at protein level). Expressed in retina, mainly in photoreceptors but also in outer plexiform and ganglion cell layers (at protein level).

Its subcellular location is the cytoplasm. It localises to the cytoskeleton. The protein localises to the microtubule organizing center. The protein resides in the centrosome. It is found in the centriolar satellite. Its subcellular location is the cell projection. It localises to the cilium. The protein localises to the cilium basal body. The protein resides in the cilium axoneme. It is found in the photoreceptor inner segment. Its subcellular location is the photoreceptor outer segment. It localises to the spindle. The protein localises to the midbody. In terms of biological role, microtubule-binding protein required for ciliogenesis. May function in ciliogenesis by mediating the transport of proteins like BBS4 to the cilium, but also through the organization of the centriolar satellites. Required for the assembly of signaling-competent cilia with proper structure and length. Mediates this function in part by regulating transition zone assembly and basal body recruitment of the IFT-B complex. Cooperates with the ciliopathy proteins CSPP1 and CEP104 during cilium length regulation. Plays two important roles during cell division. First, is required for mitotic progression via regulation of spindle assembly, organization and orientation, levels of spindle microtubules (MTs), kinetochore-fiber integrity, and chromosome alignment. Second, functions during cytokinesis in part by regulating assembly and organization of central spindle and midbody MTs. Plays a role in retina morphogenesis and/or homeostasis. In Homo sapiens (Human), this protein is Coiled-coil domain-containing protein 66.